Consider the following 128-residue polypeptide: Large ribosomal subunit protein eL32 (128 aa).

It belongs to the eukaryotic ribosomal protein eL32 family.

The protein is Large ribosomal subunit protein eL32 (rpl32e) of Thermoplasma volcanium (strain ATCC 51530 / DSM 4299 / JCM 9571 / NBRC 15438 / GSS1).